Here is a 135-residue protein sequence, read N- to C-terminus: Interleukin-4 (135 aa).

An N-terminal signal peptide occupies residues 1–24; the sequence is MGLTSQLIPALVCLLVCTSHFVHG. Disulfide bonds link C48/C85 and C70/C105. Residues N62 and N96 are each glycosylated (N-linked (GlcNAc...) asparagine).

Belongs to the IL-4/IL-13 family.

The protein localises to the secreted. Functionally, participates in at least several B-cell activation processes as well as of other cell types. It is a costimulator of DNA-synthesis. It induces the expression of class II MHC molecules on resting B-cells. It enhances both secretion and cell surface expression of IgE and IgG1. It also regulates the expression of the low affinity Fc receptor for IgE (CD23) on both lymphocytes and monocytes. Positively regulates IL31RA expression in macrophages. Stimulates autophagy in dendritic cells by interfering with mTORC1 signaling and through the induction of RUFY4. This is Interleukin-4 (IL4) from Ovis aries (Sheep).